Here is a 559-residue protein sequence, read N- to C-terminus: Probable alpha-(1-&gt;6)-mannopyranosyltransferase MSMEG_3120/MSMEI_3041 (559 aa).

The next 12 helical transmembrane spans lie at 41-61 (FGATGTVLMAIGALGAGARPV), 81-101 (VSLTMTTTGAVMMALAWLMLG), 202-222 (IVEAVMCHRLVVLIGVGLIVW), 247-267 (LLFMHLVAGIHNEALMLGLML), 300-316 (WQPMAMLVLGAVLIAMS), 321-340 (LPSLLALGFVAMALAWRWGG), 355-375 (ISLAVMAVIGWASGLGFGWLF), 386-406 (WMSPPTLIALGTGQVGILLGL), 419-439 (AIGVFMISILVSWLLFAVLRG), 455-475 (VLLFPVVQPWYLLWAIIPLAA), 480-500 (PGFRGATIAITLIVGIFGPTA), and 507-527 (LFQIVMATLASAVTVLLLIAL). The span at 535 to 548 (RPAPEPPARPPEQP) shows a compositional bias: pro residues. The interval 535-559 (RPAPEPPARPPEQPAPADDAYAESP) is disordered.

Belongs to the MptA/B family.

It localises to the membrane. Functionally, catalyzes the addition of alpha-(1-&gt;6)-mannose residue. The sequence is that of Probable alpha-(1-&gt;6)-mannopyranosyltransferase MSMEG_3120/MSMEI_3041 from Mycolicibacterium smegmatis (strain ATCC 700084 / mc(2)155) (Mycobacterium smegmatis).